The chain runs to 208 residues: ATP-dependent Clp protease proteolytic subunit (208 aa).

Residue Ser105 is the Nucleophile of the active site. His130 is a catalytic residue.

Belongs to the peptidase S14 family. Fourteen ClpP subunits assemble into 2 heptameric rings which stack back to back to give a disk-like structure with a central cavity, resembling the structure of eukaryotic proteasomes.

The protein resides in the cytoplasm. It carries out the reaction Hydrolysis of proteins to small peptides in the presence of ATP and magnesium. alpha-casein is the usual test substrate. In the absence of ATP, only oligopeptides shorter than five residues are hydrolyzed (such as succinyl-Leu-Tyr-|-NHMec, and Leu-Tyr-Leu-|-Tyr-Trp, in which cleavage of the -Tyr-|-Leu- and -Tyr-|-Trp bonds also occurs).. Cleaves peptides in various proteins in a process that requires ATP hydrolysis. Has a chymotrypsin-like activity. Plays a major role in the degradation of misfolded proteins. The polypeptide is ATP-dependent Clp protease proteolytic subunit (Xylella fastidiosa (strain 9a5c)).